The sequence spans 33 residues: Photosystem II reaction center protein Psb30 (33 aa).

A helical transmembrane segment spans residues 5–25; sequence VIAQLTVLTLMVVSGPLVIVL.

Belongs to the Psb30/Ycf12 family. As to quaternary structure, PSII is composed of 1 copy each of membrane proteins PsbA, PsbB, PsbC, PsbD, PsbE, PsbF, PsbH, PsbI, PsbJ, PsbK, PsbL, PsbM, PsbT, PsbX, PsbY, PsbZ, Psb30/Ycf12, peripheral proteins of the oxygen-evolving complex and a large number of cofactors. It forms dimeric complexes.

It is found in the plastid. Its subcellular location is the chloroplast thylakoid membrane. A core subunit of photosystem II (PSII), probably helps stabilize the reaction center. In Pinus koraiensis (Korean pine), this protein is Photosystem II reaction center protein Psb30.